The following is a 539-amino-acid chain: MIO-dependent tyrosine 2,3-aminomutase (539 aa).

The Proton donor/acceptor role is filled by Tyr-63. His-93 lines the substrate pocket. Positions 152 to 154 form a cross-link, 5-imidazolinone (Ala-Gly); that stretch reads ASG. At Ser-153 the chain carries 2,3-didehydroalanine (Ser). Residues Asn-205 and Arg-311 each contribute to the substrate site.

It belongs to the TAL/TAM family. As to quaternary structure, homotetramer; dimer of dimers. Post-translationally, contains an active site 4-methylidene-imidazol-5-one (MIO), which is formed autocatalytically by cyclization and dehydration of residues Ala-Ser-Gly.

The catalysed reaction is L-tyrosine = 3-amino-3-(4-hydroxyphenyl)propanoate. It carries out the reaction L-tyrosine = (E)-4-coumarate + NH4(+). Its function is as follows. Involved in the biosynthesis of the enediyne antitumor antibiotic C-1027. Catalyzes the MIO-dependent deamination of L-tyrosine generating the corresponding alpha,beta-unsaturated acid, (S)-beta-tyrosine. The polypeptide is MIO-dependent tyrosine 2,3-aminomutase (Streptomyces globisporus).